Reading from the N-terminus, the 121-residue chain is MARIAGIDIPRDKRVVISLTYIYGVGKTTAQQILKEAGVSEDTRVRDLTEDELGRIRQAVDQYNTEGDLRREVSLNIKRLIEIGSYRGIRHRRGLPVRGQKTKNNSRTRKGPRKTMANKKK.

Residues 92 to 121 form a disordered region; the sequence is RRGLPVRGQKTKNNSRTRKGPRKTMANKKK.

The protein belongs to the universal ribosomal protein uS13 family. In terms of assembly, part of the 30S ribosomal subunit. Forms a loose heterodimer with protein S19. Forms two bridges to the 50S subunit in the 70S ribosome.

Located at the top of the head of the 30S subunit, it contacts several helices of the 16S rRNA. In the 70S ribosome it contacts the 23S rRNA (bridge B1a) and protein L5 of the 50S subunit (bridge B1b), connecting the 2 subunits; these bridges are implicated in subunit movement. Contacts the tRNAs in the A and P-sites. The polypeptide is Small ribosomal subunit protein uS13 (Oceanobacillus iheyensis (strain DSM 14371 / CIP 107618 / JCM 11309 / KCTC 3954 / HTE831)).